Reading from the N-terminus, the 203-residue chain is Lipoprotein MlpJ (203 aa).

An N-terminal signal peptide occupies residues 1–17 (MKIINILFCISLLLLNS). Residue C18 is the site of N-palmitoyl cysteine attachment. A lipid anchor (S-diacylglycerol cysteine) is attached at C18. The tract at residues 26 to 47 (LKNNAQQTKSRKKRDLSQEELP) is disordered.

This sequence belongs to the Multicopy lipoprotein (Mlp) family.

The protein localises to the cell outer membrane. An outer membrane protein that may participate in pathogenesis. Some human Lyme disease patients have antibodies against this protein. The Mlp proteins probably undergo intragenic recombination, generating new alleles. This chain is Lipoprotein MlpJ, found in Borreliella burgdorferi (strain ATCC 35210 / DSM 4680 / CIP 102532 / B31) (Borrelia burgdorferi).